A 301-amino-acid chain; its full sequence is UDP-N-acetylenolpyruvoylglucosamine reductase (301 aa).

One can recognise an FAD-binding PCMH-type domain in the interval 30–194 (VGGEADYLVF…LSVKFALAPG (165 aa)). Arg173 is a catalytic residue. Residue Ser223 is the Proton donor of the active site. Glu293 is an active-site residue.

The protein belongs to the MurB family. The cofactor is FAD.

The protein localises to the cytoplasm. The enzyme catalyses UDP-N-acetyl-alpha-D-muramate + NADP(+) = UDP-N-acetyl-3-O-(1-carboxyvinyl)-alpha-D-glucosamine + NADPH + H(+). It functions in the pathway cell wall biogenesis; peptidoglycan biosynthesis. Its function is as follows. Cell wall formation. The protein is UDP-N-acetylenolpyruvoylglucosamine reductase of Streptococcus pneumoniae (strain 70585).